Here is a 173-residue protein sequence, read N- to C-terminus: Crossover junction endodeoxyribonuclease RuvC (173 aa).

Residues aspartate 8, glutamate 67, and aspartate 139 contribute to the active site. Residues aspartate 8, glutamate 67, and aspartate 139 each contribute to the Mg(2+) site.

This sequence belongs to the RuvC family. Homodimer which binds Holliday junction (HJ) DNA. The HJ becomes 2-fold symmetrical on binding to RuvC with unstacked arms; it has a different conformation from HJ DNA in complex with RuvA. In the full resolvosome a probable DNA-RuvA(4)-RuvB(12)-RuvC(2) complex forms which resolves the HJ. Requires Mg(2+) as cofactor.

Its subcellular location is the cytoplasm. It carries out the reaction Endonucleolytic cleavage at a junction such as a reciprocal single-stranded crossover between two homologous DNA duplexes (Holliday junction).. Functionally, the RuvA-RuvB-RuvC complex processes Holliday junction (HJ) DNA during genetic recombination and DNA repair. Endonuclease that resolves HJ intermediates. Cleaves cruciform DNA by making single-stranded nicks across the HJ at symmetrical positions within the homologous arms, yielding a 5'-phosphate and a 3'-hydroxyl group; requires a central core of homology in the junction. The consensus cleavage sequence is 5'-(A/T)TT(C/G)-3'. Cleavage occurs on the 3'-side of the TT dinucleotide at the point of strand exchange. HJ branch migration catalyzed by RuvA-RuvB allows RuvC to scan DNA until it finds its consensus sequence, where it cleaves and resolves the cruciform DNA. The protein is Crossover junction endodeoxyribonuclease RuvC of Edwardsiella ictaluri (strain 93-146).